The primary structure comprises 636 residues: Eukaryotic peptide chain release factor GTP-binding subunit ERF3A (636 aa).

2 stretches are compositionally biased toward gly residues: residues 1–16 (MDPS…GGGS) and 103–116 (AAGG…GAGG). Disordered regions lie at residues 1-54 (MDPS…AAVA) and 90-206 (LRGP…PPGA). Over residues 121 to 138 (VESSQDQSCEGSNSTVSM) the composition is skewed to polar residues. The span at 183–193 (STQEMMEEEEE) shows a compositional bias: acidic residues. In terms of domain architecture, tr-type G spans 209-435 (KEHVNVVFIG…DNLPNFNRSV (227 aa)). The G1 stretch occupies residues 218–225 (GHVDAGKS). Residue 221–226 (DAGKST) coordinates GTP. A G2 region spans residues 274–278 (GKTVE). The G3 stretch occupies residues 295-298 (DAPG). GTP contacts are provided by residues 357–360 (NKMD) and 399–401 (SGL). The G4 stretch occupies residues 357-360 (NKMD). The tract at residues 399-401 (SGL) is G5.

The protein belongs to the TRAFAC class translation factor GTPase superfamily. Classic translation factor GTPase family. ERF3 subfamily. In terms of assembly, component of the eRF1-eRF3-GTP ternary complex, composed of ETF1/ERF1 and ERF3 (GSPT1/ERF3A or GSPT2/ERF3B) and GTP. Component of the transient SURF (SMG1-UPF1-eRF1-eRF3) complex. The ETF1-GSPT1 complex interacts with JMJD4. Interacts with PABPC1. Interacts with SHFL.

It carries out the reaction GTP + H2O = GDP + phosphate + H(+). In terms of biological role, GTPase component of the eRF1-eRF3-GTP ternary complex, a ternary complex that mediates translation termination in response to the termination codons UAA, UAG and UGA. GSPT1/ERF3A mediates ETF1/ERF1 delivery to stop codons: The eRF1-eRF3-GTP complex binds to a stop codon in the ribosomal A-site. GTP hydrolysis by GSPT1/ERF3A induces a conformational change that leads to its dissociation, permitting ETF1/ERF1 to accommodate fully in the A-site. Component of the transient SURF complex which recruits UPF1 to stalled ribosomes in the context of nonsense-mediated decay (NMD) of mRNAs containing premature stop codons. Required for SHFL-mediated translation termination which inhibits programmed ribosomal frameshifting (-1PRF) of mRNA from viruses and cellular genes. This Mus musculus (Mouse) protein is Eukaryotic peptide chain release factor GTP-binding subunit ERF3A (Gspt1).